A 469-amino-acid chain; its full sequence is 3-isopropylmalate dehydratase large subunit (469 aa).

[4Fe-4S] cluster is bound by residues C349, C410, and C413.

The protein belongs to the aconitase/IPM isomerase family. LeuC type 1 subfamily. Heterodimer of LeuC and LeuD. Requires [4Fe-4S] cluster as cofactor.

The catalysed reaction is (2R,3S)-3-isopropylmalate = (2S)-2-isopropylmalate. It functions in the pathway amino-acid biosynthesis; L-leucine biosynthesis; L-leucine from 3-methyl-2-oxobutanoate: step 2/4. Catalyzes the isomerization between 2-isopropylmalate and 3-isopropylmalate, via the formation of 2-isopropylmaleate. This chain is 3-isopropylmalate dehydratase large subunit, found in Neisseria meningitidis serogroup C / serotype 2a (strain ATCC 700532 / DSM 15464 / FAM18).